Consider the following 178-residue polypeptide: Putative pre-16S rRNA nuclease (178 aa).

Residues 1–18 show a composition bias toward basic and acidic residues; sequence MDHAEQGPDRPGVDDPGR. The segment at 1-21 is disordered; the sequence is MDHAEQGPDRPGVDDPGRGRR.

The protein belongs to the YqgF nuclease family.

It is found in the cytoplasm. Could be a nuclease involved in processing of the 5'-end of pre-16S rRNA. In Rhodococcus jostii (strain RHA1), this protein is Putative pre-16S rRNA nuclease.